The primary structure comprises 28 residues: Cytochrome b6-f complex subunit 6 (28 aa).

Residues 2-22 form a helical membrane-spanning segment; the sequence is VEYLVILSGMFGLALACFFGL.

This sequence belongs to the PetL family. In terms of assembly, the 4 large subunits of the cytochrome b6-f complex are cytochrome b6, subunit IV (17 kDa polypeptide, PetD), cytochrome f and the Rieske protein, while the 4 small subunits are PetG, PetL, PetM and PetN. The complex functions as a dimer.

The protein resides in the plastid. It is found in the cyanelle thylakoid membrane. Its function is as follows. Component of the cytochrome b6-f complex, which mediates electron transfer between photosystem II (PSII) and photosystem I (PSI), cyclic electron flow around PSI, and state transitions. PetL is important for photoautotrophic growth as well as for electron transfer efficiency and stability of the cytochrome b6-f complex. The protein is Cytochrome b6-f complex subunit 6 of Cyanophora paradoxa.